Reading from the N-terminus, the 156-residue chain is Small ribosomal subunit protein uS7 (156 aa).

This sequence belongs to the universal ribosomal protein uS7 family. In terms of assembly, part of the 30S ribosomal subunit. Contacts proteins S9 and S11.

Functionally, one of the primary rRNA binding proteins, it binds directly to 16S rRNA where it nucleates assembly of the head domain of the 30S subunit. Is located at the subunit interface close to the decoding center, probably blocks exit of the E-site tRNA. The protein is Small ribosomal subunit protein uS7 of Mycoplasmopsis synoviae (strain 53) (Mycoplasma synoviae).